The primary structure comprises 265 residues: Mlc titration factor A (265 aa).

Positions 111, 148, 152, and 211 each coordinate Zn(2+).

The protein belongs to the MtfA family. As to quaternary structure, interacts with Mlc. Zn(2+) is required as a cofactor.

Its subcellular location is the cytoplasm. Its function is as follows. Involved in the modulation of the activity of the glucose-phosphotransferase system (glucose-PTS). Interacts with the transcriptional repressor Mlc, preventing its interaction with DNA and leading to the modulation of expression of genes regulated by Mlc, including ptsG, which encodes the PTS system glucose-specific EIICB component. In terms of biological role, shows zinc-dependent metallopeptidase activity. This chain is Mlc titration factor A, found in Escherichia coli O9:H4 (strain HS).